The chain runs to 375 residues: Succinyl-diaminopimelate desuccinylase (375 aa).

Residue H66 participates in Zn(2+) binding. D68 is an active-site residue. D99 contacts Zn(2+). The active-site Proton acceptor is E133. 3 residues coordinate Zn(2+): E134, E162, and H348.

It belongs to the peptidase M20A family. DapE subfamily. In terms of assembly, homodimer. Requires Zn(2+) as cofactor. Co(2+) is required as a cofactor.

It carries out the reaction N-succinyl-(2S,6S)-2,6-diaminopimelate + H2O = (2S,6S)-2,6-diaminopimelate + succinate. It functions in the pathway amino-acid biosynthesis; L-lysine biosynthesis via DAP pathway; LL-2,6-diaminopimelate from (S)-tetrahydrodipicolinate (succinylase route): step 3/3. Catalyzes the hydrolysis of N-succinyl-L,L-diaminopimelic acid (SDAP), forming succinate and LL-2,6-diaminopimelate (DAP), an intermediate involved in the bacterial biosynthesis of lysine and meso-diaminopimelic acid, an essential component of bacterial cell walls. The protein is Succinyl-diaminopimelate desuccinylase of Janthinobacterium sp. (strain Marseille) (Minibacterium massiliensis).